Consider the following 464-residue polypeptide: MSTAALVEGKIVQCIGAVIDVEFPRESMPKIYDALILEGSELTLEVQQQLGDGVVRTICLGASDGLRRGVVVKNTGNPISVPVGKPTLGRIMDVLGRPIDEAGPIESENKRSIHQKAPAFDELSPSTELLETGIKVIDLICPFAKGGKVGLFGGAGVGKTVNMMELINNIAKEHGGYSVFAGVGERTREGNDFYHEMKDSNVLDKVALVYGQMNEPPGNRLRVALTGLTMAEHFRDEGLDVLFFVDNIYRFTLAGTEVSALLGRMPSAVGYQPTLAEEMGKLQERITSTKKGSITSVQAVYVPADDLTDPSPATTFGHLDATVVLSRDIASLGIYPAVDPLDSTSRQIDPNVIGEEHYSITRRVQQTLQRYKELRDIIAILGMDELSPEDKLSVARARKIQRFLSQPFHVAEVFTGSPGKYVPLKETIRGFKMIVDGECDHLPEQAFYMVGTIDEAFEKAKKIQ.

153-160 (GGAGVGKT) contacts ATP.

The protein belongs to the ATPase alpha/beta chains family. As to quaternary structure, F-type ATPases have 2 components, CF(1) - the catalytic core - and CF(0) - the membrane proton channel. CF(1) has five subunits: alpha(3), beta(3), gamma(1), delta(1), epsilon(1). CF(0) has three main subunits: a(1), b(2) and c(9-12). The alpha and beta chains form an alternating ring which encloses part of the gamma chain. CF(1) is attached to CF(0) by a central stalk formed by the gamma and epsilon chains, while a peripheral stalk is formed by the delta and b chains.

Its subcellular location is the cell inner membrane. The catalysed reaction is ATP + H2O + 4 H(+)(in) = ADP + phosphate + 5 H(+)(out). Produces ATP from ADP in the presence of a proton gradient across the membrane. The catalytic sites are hosted primarily by the beta subunits. This is ATP synthase subunit beta 1 from Burkholderia mallei (strain SAVP1).